The sequence spans 165 residues: MTLEEFSAAEQKIERMDTVGDALEEVLSKARSQRTITVGVYEAAKLLNVDPDNVVLCLLAADEDDDRDVALQIHFTLIRAFCCENDINILRVSNPGRLAELLLLENDKSPAESGGLAQTPDLHCVLVTNPHSSQWKDPALSQLICFCRESRYMDQWVPVINLPER.

T2 carries the post-translational modification Phosphothreonine.

It belongs to the GADD45 family. Interacts with AURKA, PCNA, GADD45GIP1 and MAPK14.

The protein localises to the nucleus. Functionally, might affect PCNA interaction with some CDK (cell division protein kinase) complexes; stimulates DNA excision repair in vitro and inhibits entry of cells into S phase. In T-cells, functions as a regulator of p38 MAPKs by inhibiting p88 phosphorylation and activity. This Rattus norvegicus (Rat) protein is Growth arrest and DNA damage-inducible protein GADD45 alpha (Gadd45a).